Reading from the N-terminus, the 680-residue chain is MTQSPFILRTDYEPRGDQPEAIGQIVSNIEAGVTDQVLLGVTGSGKTFTMAQVIARCGRPALVLAPNKTLAAQLYNEFRQLFPENAVEYFVSYYDYYQPEAYVPSSDTYIEKDSSINDNIDKLRHAATHALLTRRDVVIVASVSCIYGLGSPEYYAKLVIPVETGQRLSMDALITRLVEVQYERNDYDFHRGTFRVRGDVLEIIPAYHHERALRIEFFGDDIDAISEIDPLTGQVLASVGKTVIYPASHYVSDRDNLVRAISDIRDELGERLRELKGGNRLVEAQRLEQRTMLDLEMMEEMGYCNGVENYSRHLDGRKAGDPPSCLLDYFPDDFLLFVDESHITVSQVGAMYKGDRSRKSTLVDYGFRLPSALDNRPLEFHEFLARLNQAIYVSATPGKWELDRSQGIVAEQIIRPTGLVDPITEVRPTKGQVDDLLGECRLRAARDERVLVTTLTKRMAEDLTEYFNEMGVAARYLHSDIDTMERMAIIQALRRKEFDVLVGINLLREGLDIPEVSLVSILDADKEGFLRSAGSLIQTFGRAARNVEGRVLMYADVVTRSMQAAMDETARRRERQTGYNEAHHIVPATIRKAVETPFDAIYAEAAEAKGRKGKGRKGAAQAAETFAPWSSDPHELAKQIQQLERDMREAAKELEFERAAELRDRIRLLREHLLGAGGAG.

Residues 27-192 (SNIEAGVTDQ…ERNDYDFHRG (166 aa)) enclose the Helicase ATP-binding domain. 40-47 (GVTGSGKT) contributes to the ATP binding site. Positions 93–116 (YYDYYQPEAYVPSSDTYIEKDSSI) match the Beta-hairpin motif. A Helicase C-terminal domain is found at 432 to 594 (QVDDLLGECR…IVPATIRKAV (163 aa)). Residues 637 to 672 (AKQIQQLERDMREAAKELEFERAAELRDRIRLLREH) enclose the UVR domain.

Belongs to the UvrB family. As to quaternary structure, forms a heterotetramer with UvrA during the search for lesions. Interacts with UvrC in an incision complex.

The protein resides in the cytoplasm. In terms of biological role, the UvrABC repair system catalyzes the recognition and processing of DNA lesions. A damage recognition complex composed of 2 UvrA and 2 UvrB subunits scans DNA for abnormalities. Upon binding of the UvrA(2)B(2) complex to a putative damaged site, the DNA wraps around one UvrB monomer. DNA wrap is dependent on ATP binding by UvrB and probably causes local melting of the DNA helix, facilitating insertion of UvrB beta-hairpin between the DNA strands. Then UvrB probes one DNA strand for the presence of a lesion. If a lesion is found the UvrA subunits dissociate and the UvrB-DNA preincision complex is formed. This complex is subsequently bound by UvrC and the second UvrB is released. If no lesion is found, the DNA wraps around the other UvrB subunit that will check the other stand for damage. In Nitratidesulfovibrio vulgaris (strain DSM 19637 / Miyazaki F) (Desulfovibrio vulgaris), this protein is UvrABC system protein B.